The sequence spans 191 residues: Protein YceI (191 aa).

A signal peptide spans 1–22; it reads MKKNLLGFTLASLLFTTGSAVA.

This sequence belongs to the UPF0312 family. Type 1 subfamily.

It is found in the periplasm. The polypeptide is Protein YceI (Salmonella dublin (strain CT_02021853)).